The following is a 362-amino-acid chain: Porin Omp2b (362 aa).

The first 22 residues, 1 to 22 (MNIKSLLLGSAAALVAASGAQA), serve as a signal peptide directing secretion.

Belongs to the alphaproteobacteria porin family. In terms of assembly, homotrimer.

It is found in the cell outer membrane. Functionally, forms passive diffusion pores that allow small molecular weight hydrophilic materials across the outer membrane. This is Porin Omp2b (omp2b) from Brucella abortus (strain S19).